Here is a 73-residue protein sequence, read N- to C-terminus: UPF0235 protein LA_1736 (73 aa).

The protein belongs to the UPF0235 family.

The chain is UPF0235 protein LA_1736 from Leptospira interrogans serogroup Icterohaemorrhagiae serovar Lai (strain 56601).